The primary structure comprises 1026 residues: DNA polymerase catalytic subunit (1026 aa).

Residues 664 to 695 are a coiled coil; that stretch reads LKTWLAKRKSIKKELEQCQDAKMKTILDKQQL.

The protein belongs to the DNA polymerase type-B family.

The protein localises to the host nucleus. It carries out the reaction DNA(n) + a 2'-deoxyribonucleoside 5'-triphosphate = DNA(n+1) + diphosphate. Its function is as follows. Replicates viral genomic DNA. This is DNA polymerase catalytic subunit (9) from Alcelaphine herpesvirus 1 (strain C500) (AlHV-1).